Reading from the N-terminus, the 110-residue chain is Large ribosomal subunit protein uL24 (110 aa).

This sequence belongs to the universal ribosomal protein uL24 family. Part of the 50S ribosomal subunit.

One of two assembly initiator proteins, it binds directly to the 5'-end of the 23S rRNA, where it nucleates assembly of the 50S subunit. Functionally, one of the proteins that surrounds the polypeptide exit tunnel on the outside of the subunit. The polypeptide is Large ribosomal subunit protein uL24 (Frankia alni (strain DSM 45986 / CECT 9034 / ACN14a)).